The primary structure comprises 70 residues: Turripeptide OL179 (70 aa).

Residues 1–21 (MMAKQVVVLLALLLLLPIVTA) form the signal peptide. Residues 22-32 (SMGDASGRTGR) constitute a propeptide that is removed on maturation.

In terms of tissue distribution, expressed by the venom duct.

The protein resides in the secreted. Its function is as follows. Acts as a neurotoxin by inhibiting an ion channel. The chain is Turripeptide OL179 from Iotyrris olangoensis (Sea snail).